The sequence spans 452 residues: Pup--protein ligase (452 aa).

Residue E9 coordinates Mg(2+). Residue R53 coordinates ATP. Residue Y55 participates in Mg(2+) binding. Catalysis depends on D57, which acts as the Proton acceptor. Mg(2+) is bound at residue E63. T66 and W419 together coordinate ATP.

It belongs to the Pup ligase/Pup deamidase family. Pup-conjugating enzyme subfamily.

The enzyme catalyses ATP + [prokaryotic ubiquitin-like protein]-L-glutamate + [protein]-L-lysine = ADP + phosphate + N(6)-([prokaryotic ubiquitin-like protein]-gamma-L-glutamyl)-[protein]-L-lysine.. Its pathway is protein degradation; proteasomal Pup-dependent pathway. It participates in protein modification; protein pupylation. Its function is as follows. Catalyzes the covalent attachment of the prokaryotic ubiquitin-like protein modifier Pup to the proteasomal substrate proteins, thereby targeting them for proteasomal degradation. This tagging system is termed pupylation. The ligation reaction involves the side-chain carboxylate of the C-terminal glutamate of Pup and the side-chain amino group of a substrate lysine. The chain is Pup--protein ligase from Frankia alni (strain DSM 45986 / CECT 9034 / ACN14a).